A 524-amino-acid chain; its full sequence is Hydroxysteroid dehydrogenase-like protein 2 (524 aa).

NADP(+)-binding positions include 17–23 (GASRGIG), Lys42, and Asp74. An N6-(2-hydroxyisobutyryl)lysine modification is found at Lys42. Residue Lys116 is modified to N6-acetyllysine. The active-site Proton acceptor is the Tyr168. Lys172 is a binding site for NADP(+). Over residues 283-300 (EEKESYDPVPEVKEEKLQ) the composition is skewed to basic and acidic residues. The disordered stretch occupies residues 283–410 (EEKESYDPVP…PLLQSVLPPK (128 aa)). A compositionally biased stretch (low complexity) spans 301–391 (LQEQPQLQEQ…QQQPQQRPQQ (91 aa)). The SCP2 domain maps to 414 to 521 (GAVEETFRIV…KLEKLMTHMN (108 aa)). Lys424 bears the N6-succinyllysine mark.

It belongs to the short-chain dehydrogenases/reductases (SDR) family.

Its subcellular location is the peroxisome. The protein resides in the mitochondrion. Its function is as follows. Has apparently no steroid dehydrogenase activity. Controls bile acid (BA) and lipid metabolism in response to nutritional cues. The sequence is that of Hydroxysteroid dehydrogenase-like protein 2 (Hsdl2) from Rattus norvegicus (Rat).